A 393-amino-acid polypeptide reads, in one-letter code: S-adenosylmethionine synthase (393 aa).

Position 16 (His-16) interacts with ATP. Asp-18 serves as a coordination point for Mg(2+). A K(+)-binding site is contributed by Glu-44. L-methionine contacts are provided by Glu-57 and Gln-100. The interval 100–110 is flexible loop; that stretch reads QSNDIAQGVDH. ATP is bound by residues 167–169, 238–239, Asp-247, 253–254, Ala-270, and Lys-274; these read DAK, RF, and RK. An L-methionine-binding site is contributed by Asp-247. An L-methionine-binding site is contributed by Lys-278.

Belongs to the AdoMet synthase family. As to quaternary structure, homotetramer; dimer of dimers. It depends on Mg(2+) as a cofactor. K(+) serves as cofactor.

Its subcellular location is the cytoplasm. It catalyses the reaction L-methionine + ATP + H2O = S-adenosyl-L-methionine + phosphate + diphosphate. The protein operates within amino-acid biosynthesis; S-adenosyl-L-methionine biosynthesis; S-adenosyl-L-methionine from L-methionine: step 1/1. Catalyzes the formation of S-adenosylmethionine (AdoMet) from methionine and ATP. The overall synthetic reaction is composed of two sequential steps, AdoMet formation and the subsequent tripolyphosphate hydrolysis which occurs prior to release of AdoMet from the enzyme. The sequence is that of S-adenosylmethionine synthase from Polaromonas sp. (strain JS666 / ATCC BAA-500).